We begin with the raw amino-acid sequence, 211 residues long: Synaptosomal-associated protein 23 (211 aa).

Position 1 is an N-acetylmethionine (M1). A phosphoserine mark is found at S5, S6, S20, S23, and S34. The region spanning 14–76 (HQITDESLES…RETEKTLTEL (63 aa)) is the t-SNARE coiled-coil homology 1 domain. Residues 23–76 (STRRILGLAIESQDAGIKTITMLDEQKEQLNRIEEGLDQINKDMRETEKTLTEL) are a coiled coil. 5 S-palmitoyl cysteine lipidation sites follow: C79, C80, C83, C85, and C87. The residue at position 110 (S110) is a Phosphoserine. The S-palmitoyl cysteine moiety is linked to residue C112. In terms of domain architecture, t-SNARE coiled-coil homology 2 spans 146–208 (DAREDEMEEN…DIANARAKKL (63 aa)). Residue S161 is modified to Phosphoserine.

The protein belongs to the SNAP-25 family. As to quaternary structure, homotetramer (via coiled-coil domain), also forms heterotetramers with STX4 and VAMP3. Found in a complex with VAMP8 and STX1A. Found in a complex with VAMP8 and STX4 in pancreas. Interacts simultaneously with SNAPIN and SYN4. Interacts with STX1A. Interacts with STX12. Interacts tightly to multiple syntaxins and synaptobrevins/VAMPs. Interacts with ZDHHC13 (via ANK repeats). Interacts with ZDHHC17 (via ANK repeats). As to expression, ubiquitous. Highest levels where found in placenta.

It localises to the cell membrane. Its subcellular location is the synapse. It is found in the synaptosome. Functionally, essential component of the high affinity receptor for the general membrane fusion machinery and an important regulator of transport vesicle docking and fusion. The sequence is that of Synaptosomal-associated protein 23 (SNAP23) from Homo sapiens (Human).